Consider the following 247-residue polypeptide: DNA polymerase sliding clamp (247 aa).

Belongs to the PCNA family. Homotrimer. The subunits circularize to form a toroid; DNA passes through its center. Replication factor C (RFC) is required to load the toroid on the DNA.

Sliding clamp subunit that acts as a moving platform for DNA processing. Responsible for tethering the catalytic subunit of DNA polymerase and other proteins to DNA during high-speed replication. This Haloarcula marismortui (strain ATCC 43049 / DSM 3752 / JCM 8966 / VKM B-1809) (Halobacterium marismortui) protein is DNA polymerase sliding clamp.